The chain runs to 519 residues: 2-isopropylmalate synthase (519 aa).

The 263-residue stretch at 5-267 (VIIFDTTLRD…QTRINHKEIY (263 aa)) folds into the Pyruvate carboxyltransferase domain. Mn(2+)-binding residues include Asp-14, His-202, His-204, and Asn-238. The segment at 392-519 (VMNYFNTQSG…RKHHTTQEAV (128 aa)) is regulatory domain.

Belongs to the alpha-IPM synthase/homocitrate synthase family. LeuA type 1 subfamily. As to quaternary structure, homodimer. Mn(2+) serves as cofactor.

Its subcellular location is the cytoplasm. The enzyme catalyses 3-methyl-2-oxobutanoate + acetyl-CoA + H2O = (2S)-2-isopropylmalate + CoA + H(+). The protein operates within amino-acid biosynthesis; L-leucine biosynthesis; L-leucine from 3-methyl-2-oxobutanoate: step 1/4. In terms of biological role, catalyzes the condensation of the acetyl group of acetyl-CoA with 3-methyl-2-oxobutanoate (2-ketoisovalerate) to form 3-carboxy-3-hydroxy-4-methylpentanoate (2-isopropylmalate). This is 2-isopropylmalate synthase from Proteus mirabilis (strain HI4320).